The primary structure comprises 292 residues: Acetylglutamate kinase (292 aa).

Substrate is bound by residues 64 to 65 (GG), Arg86, and Asn190.

Belongs to the acetylglutamate kinase family. ArgB subfamily.

It localises to the cytoplasm. The enzyme catalyses N-acetyl-L-glutamate + ATP = N-acetyl-L-glutamyl 5-phosphate + ADP. Its pathway is amino-acid biosynthesis; L-arginine biosynthesis; N(2)-acetyl-L-ornithine from L-glutamate: step 2/4. In terms of biological role, catalyzes the ATP-dependent phosphorylation of N-acetyl-L-glutamate. The chain is Acetylglutamate kinase from Pelobacter propionicus (strain DSM 2379 / NBRC 103807 / OttBd1).